Here is a 630-residue protein sequence, read N- to C-terminus: MRISFAIASTAKRFVHRSLVVRGNAATVSPSFSFFWRRAFSGKTSYDYREKLSRNGLSELKLDDAVALFGEMVKSRPFPSIIEFSKLLSAIAKMNKFDVVISLGEQMQNLGIPHNHYTYSILINCFCRRSQLPLALAVLGKMMKLGYEPNIVTLSSLLNGYCHSKRISEAVALVDQMFVTGYQPNTVTFNTLIHGLFLHNKASEAMALIDRMVAKGCQPDLVTYGVVVNGLCKRGDTDLAFNLLNKMEQGKLEPGVLIYNTIIDGLCKYKHMDDALNLFKEMETKGIRPNVVTYSSLISCLCNYGRWSDASRLLSDMIERKINPDVFTFSALIDAFVKEGKLVEAEKLYDEMVKRSIDPSIVTYSSLINGFCMHDRLDEAKQMFEFMVSKHCFPDVVTYNTLIKGFCKYKRVEEGMEVFREMSQRGLVGNTVTYNILIQGLFQAGDCDMAQEIFKEMVSDGVPPNIMTYNTLLDGLCKNGKLEKAMVVFEYLQRSKMEPTIYTYNIMIEGMCKAGKVEDGWDLFCNLSLKGVKPDVVAYNTMISGFCRKGSKEEADALFKEMKEDGTLPNSGCYNTLIRARLRDGDREASAELIKEMRSCGFAGDASTIGLVTNMLHDGRLDKSFLDMLS.

A mitochondrion-targeting transit peptide spans 1-22; sequence MRISFAIASTAKRFVHRSLVVR. 16 PPR repeats span residues 44-79, 80-114, 115-149, 150-184, 185-219, 220-254, 255-289, 290-324, 325-359, 360-394, 395-429, 430-464, 465-499, 500-534, 535-569, and 570-604; these read TSYDYREKLSRNGLSELKLDDAVALFGEMVKSRPFP, SIIEFSKLLSAIAKMNKFDVVISLGEQMQNLGIPH, NHYTYSILINCFCRRSQLPLALAVLGKMMKLGYEP, NIVTLSSLLNGYCHSKRISEAVALVDQMFVTGYQP, NTVTFNTLIHGLFLHNKASEAMALIDRMVAKGCQP, DLVTYGVVVNGLCKRGDTDLAFNLLNKMEQGKLEP, GVLIYNTIIDGLCKYKHMDDALNLFKEMETKGIRP, NVVTYSSLISCLCNYGRWSDASRLLSDMIERKINP, DVFTFSALIDAFVKEGKLVEAEKLYDEMVKRSIDP, SIVTYSSLINGFCMHDRLDEAKQMFEFMVSKHCFP, DVVTYNTLIKGFCKYKRVEEGMEVFREMSQRGLVG, NTVTYNILIQGLFQAGDCDMAQEIFKEMVSDGVPP, NIMTYNTLLDGLCKNGKLEKAMVVFEYLQRSKMEP, TIYTYNIMIEGMCKAGKVEDGWDLFCNLSLKGVKP, DVVAYNTMISGFCRKGSKEEADALFKEMKEDGTLP, and NSGCYNTLIRARLRDGDREASAELIKEMRSCGFAG.

It belongs to the PPR family. P subfamily.

The protein resides in the mitochondrion. The sequence is that of Pentatricopeptide repeat-containing protein At1g62670, mitochondrial from Arabidopsis thaliana (Mouse-ear cress).